Consider the following 424-residue polypeptide: N-succinylarginine dihydrolase (424 aa).

Substrate is bound by residues 19–28 (AGLSRGNVAS), asparagine 110, and 137–138 (HR). Residue glutamate 174 is part of the active site. Residue arginine 206 coordinates substrate. Histidine 242 is a catalytic residue. Positions 244 and 351 each coordinate substrate. Cysteine 357 acts as the Nucleophile in catalysis.

The protein belongs to the succinylarginine dihydrolase family. As to quaternary structure, homodimer.

The enzyme catalyses N(2)-succinyl-L-arginine + 2 H2O + 2 H(+) = N(2)-succinyl-L-ornithine + 2 NH4(+) + CO2. The protein operates within amino-acid degradation; L-arginine degradation via AST pathway; L-glutamate and succinate from L-arginine: step 2/5. Catalyzes the hydrolysis of N(2)-succinylarginine into N(2)-succinylornithine, ammonia and CO(2). This is N-succinylarginine dihydrolase from Zymomonas mobilis subsp. mobilis (strain ATCC 31821 / ZM4 / CP4).